The primary structure comprises 772 residues: Tubulin monoglycylase TTLL3 (772 aa).

The interval 50–81 (PTLLPPQKDLDSSAMGDSDTTEDEDEDEDEEF) is disordered. Positions 68–81 (DTTEDEDEDEDEEF) are enriched in acidic residues. A TTL domain is found at 151–510 (ARNVLKLVVK…RMLDRNCDTG (360 aa)). Residues Lys-283, 289-290 (RG), 321-324 (QKYI), 334-336 (KFD), and 378-379 (CN) contribute to the ATP site. An a protein-binding site is contributed by Arg-289. Ser-381 is a binding site for L-glutamate. Residues Asp-456, Glu-469, and Asn-471 each contribute to the Mg(2+) site. Glu-469 provides a ligand contact to ATP.

The cofactor is Mg(2+). In terms of tissue distribution, expressed in brain, heart, kidney, testis, liver, lung, muscle, spleen, trachea and colon.

Its subcellular location is the cytoplasm. It localises to the cytoskeleton. The protein localises to the cell projection. It is found in the cilium. The protein resides in the cilium axoneme. Its subcellular location is the flagellum axoneme. The catalysed reaction is L-glutamyl-[protein] + glycine + ATP = glycyl-L-glutamyl-[protein] + ADP + phosphate + H(+). Functionally, monoglycylase which modifies alpha- and beta-tubulin, adding a single glycine on the gamma-carboxyl groups of specific glutamate residues to generate monoglycine side chains within the C-terminal tail of tubulin. Not involved in elongation step of the polyglycylation reaction. Preferentially glycylates a beta-tail peptide over the alpha-tail, although shifts its preference toward alpha-tail as beta-tail glutamylation increases. Competes with polyglutamylases for modification site on beta-tubulin substrate, thereby creating an anticorrelation between glycylation and glutamylation reactions. Together with TTLL8, mediates microtubule glycylation of primary and motile cilia, which is essential for their stability and maintenance. Involved in microtubule glycylation of primary cilia in colon which controls cell proliferation of epithelial cells and plays an essential role in colon cancer development. Together with TTLL8, glycylates sperm flagella which regulates axonemal dynein motor activity, thereby controlling flagellar beat, directional sperm swimming and male fertility. In Homo sapiens (Human), this protein is Tubulin monoglycylase TTLL3.